The chain runs to 291 residues: Bis(5'-nucleosyl)-tetraphosphatase, symmetrical (291 aa).

Belongs to the Ap4A hydrolase family.

It carries out the reaction P(1),P(4)-bis(5'-adenosyl) tetraphosphate + H2O = 2 ADP + 2 H(+). Hydrolyzes diadenosine 5',5'''-P1,P4-tetraphosphate to yield ADP. The sequence is that of Bis(5'-nucleosyl)-tetraphosphatase, symmetrical from Coxiella burnetii (strain CbuK_Q154) (Coxiella burnetii (strain Q154)).